A 477-amino-acid chain; its full sequence is Adenosylhomocysteinase (477 aa).

Thr-63, Asp-142, and Glu-202 together coordinate substrate. Residue 203-205 (TTT) participates in NAD(+) binding. Substrate contacts are provided by Lys-232 and Asp-236. NAD(+) is bound by residues Asn-237, 266-271 (GYGDVG), Glu-289, Asn-324, 345-347 (IGH), and Asn-390.

Belongs to the adenosylhomocysteinase family. The cofactor is NAD(+).

It localises to the cytoplasm. The enzyme catalyses S-adenosyl-L-homocysteine + H2O = L-homocysteine + adenosine. The protein operates within amino-acid biosynthesis; L-homocysteine biosynthesis; L-homocysteine from S-adenosyl-L-homocysteine: step 1/1. Functionally, may play a key role in the regulation of the intracellular concentration of adenosylhomocysteine. The polypeptide is Adenosylhomocysteinase (Leptothrix cholodnii (strain ATCC 51168 / LMG 8142 / SP-6) (Leptothrix discophora (strain SP-6))).